The primary structure comprises 320 residues: Ferrochelatase (320 aa).

Residues H194 and E275 each coordinate Fe cation.

It belongs to the ferrochelatase family.

Its subcellular location is the cytoplasm. The catalysed reaction is heme b + 2 H(+) = protoporphyrin IX + Fe(2+). It participates in porphyrin-containing compound metabolism; protoheme biosynthesis; protoheme from protoporphyrin-IX: step 1/1. Catalyzes the ferrous insertion into protoporphyrin IX. This is Ferrochelatase from Cronobacter sakazakii (strain ATCC BAA-894) (Enterobacter sakazakii).